A 398-amino-acid chain; its full sequence is Putative molybdopterin biosynthesis protein MJ0666 (398 aa).

Belongs to the MoeA family.

It functions in the pathway cofactor biosynthesis; molybdopterin biosynthesis. This Methanocaldococcus jannaschii (strain ATCC 43067 / DSM 2661 / JAL-1 / JCM 10045 / NBRC 100440) (Methanococcus jannaschii) protein is Putative molybdopterin biosynthesis protein MJ0666.